Reading from the N-terminus, the 482-residue chain is Malvidin galactosylase UGT88C3 (482 aa).

The active-site Proton acceptor is the H16. D117 functions as the Charge relay in the catalytic mechanism. UDP contacts are provided by S279, W345, A349, H366, N370, S371, and E374.

It belongs to the UDP-glycosyltransferase family. As to expression, highly expressed in leaves, sheaths, pistils and embryos, observed in stems, stem nodes and panicles, and present at low levels in roots.

Its subcellular location is the endoplasmic reticulum. The protein resides in the nucleus. The catalysed reaction is malvidin + UDP-alpha-D-galactose = malvidin 3-O-beta-D-galactoside + UDP + H(+). It participates in pigment biosynthesis; anthocyanin biosynthesis. Functionally, UDP-glycosyltransferase which uses UDP-galactose and malvidin as substrates to catalyze the biosynthesis of malvidin 3-O-galactoside, an anthocyanin conferring purple pigmentation. In Oryza sativa subsp. japonica (Rice), this protein is Malvidin galactosylase UGT88C3.